The following is a 1453-amino-acid chain: ABC transporter G family member 34 (1453 aa).

Residues 1–24 (MLGRDEDLVRTMSGRGSLGSTSHR) form a disordered region. One can recognise an ABC transporter 1 domain in the interval 173–446 (LGLFHLLPSK…FEYMGFKCPE (274 aa)). Residue 206 to 213 (GPPSSGKT) coordinates ATP. In terms of domain architecture, ABC transmembrane type-2 1 spans 524 to 737 (DLFKACFDRE…GQTALVINEF (214 aa)). A run of 6 helical transmembrane segments spans residues 542–562 (FVYV…MTVY), 582–602 (LFFS…FTVM), 621–641 (FALP…VIWI), 661–681 (LLAY…LGAL), 687–707 (IANS…GFII), and 773–793 (FWIC…CYII). An ABC transporter 2 domain is found at 852–1105 (LAFNNVNYYV…LVEYFEAIEG (254 aa)). 897-904 (GVSGAGKT) contributes to the ATP binding site. Positions 1177–1391 (TQTKACFWKM…TLYGIITSQV (215 aa)) constitute an ABC transmembrane type-2 2 domain. A run of 7 helical transmembrane segments spans residues 1196-1216 (YNAI…LLFW), 1230-1250 (NFFG…AATV), 1289-1309 (IQTG…WTVV), 1311-1331 (FFWF…YGMM), 1341-1361 (IAGI…GFLI), 1366-1386 (IPIW…LYGI), and 1422-1442 (FLPV…FAFA).

The protein belongs to the ABC transporter superfamily. ABCG family. PDR (TC 3.A.1.205) subfamily. In terms of tissue distribution, expressed in roots at low levels.

The protein localises to the membrane. Functionally, may be a general defense protein. The chain is ABC transporter G family member 34 (ABCG34) from Arabidopsis thaliana (Mouse-ear cress).